A 1204-amino-acid chain; its full sequence is Exportin-5 (1204 aa).

Residues 1–108 (MEMEQVNALC…ANGTLRILEE (108 aa)) are necessary for interaction with Ran. N6-acetyllysine is present on Lys396. A necessary for interaction with ILF3 region spans residues 533 to 640 (ELLQLVLNFE…KQLLSNELLL (108 aa)). The interval 641–642 (TQ) is pre-siRNA binding.

This sequence belongs to the exportin family. As to quaternary structure, component of a nuclear export receptor complex composed of XPO5, RAN, dsRNA-binding proteins and dsRNA. Found in a nuclear export complex with XPO5, RAN, EEF1A1, and aminoacylated tRNA. Found in a nuclear export complex with XPO5, RAN, ILF3 and dsRNA. Found in a nuclear export complex with XPO5, RAN and pre-miRNA. Found in a nuclear export complex with XPO5, RAN, ILF3 and minihelix VA1 dsRNA. Found in a nuclear export complex with XPO5, RAN, ILF3, ZNF346 and dsRNA. Interacts with EEF1A1, ILF3, NUP153, NUP214 and ZNF346. Interacts with RAN and cargo proteins in a GTP-dependent manner. Interacts with ADAR/ADAR1 (via DRBM domains). Interacts with SMAD4; mediates nuclear export of SMAD4. Interacts with RAN (GTP-bound form).

It is found in the nucleus. The protein resides in the cytoplasm. In terms of biological role, mediates the nuclear export of proteins bearing a double-stranded RNA binding domain (dsRBD) and double-stranded RNAs (cargos). XPO5 in the nucleus binds cooperatively to the RNA and to the GTPase Ran in its active GTP-bound form. Proteins containing dsRBDs can associate with this trimeric complex through the RNA. Docking of this complex to the nuclear pore complex (NPC) is mediated through binding to nucleoporins. Upon transit of a nuclear export complex into the cytoplasm, hydrolysis of Ran-GTP to Ran-GDP (induced by RANBP1 and RANGAP1, respectively) cause disassembly of the complex and release of the cargo from the export receptor. XPO5 then returns to the nuclear compartment by diffusion through the nuclear pore complex, to mediate another round of transport. The directionality of nuclear export is thought to be conferred by an asymmetric distribution of the GTP- and GDP-bound forms of Ran between the cytoplasm and nucleus. Overexpression may in some circumstances enhance RNA-mediated gene silencing (RNAi). Mediates nuclear export of ADAR/ADAR1 in a RanGTP-dependent manner. Its function is as follows. Mediates the nuclear export of micro-RNA precursors, which form short hairpins. Also mediates the nuclear export of synthetic short hairpin RNAs used for RNA interference. In some circumstances can also mediate the nuclear export of deacylated and aminoacylated tRNAs. Specifically recognizes dsRNAs that lack a 5'-overhang in a sequence-independent manner, have only a short 3'-overhang, and that have a double-stranded length of at least 15 base-pairs. Binding is dependent on Ran-GTP. The polypeptide is Exportin-5 (Xpo5) (Mus musculus (Mouse)).